A 166-amino-acid polypeptide reads, in one-letter code: Phosphopantetheine adenylyltransferase (166 aa).

Serine 11 contacts substrate. Residues 11–12 and histidine 19 each bind ATP; that span reads SF. The substrate site is built by lysine 43, alanine 76, and arginine 90. Residues 91-93, glutamate 101, and 126-132 contribute to the ATP site; these read GLR and YRYFSSS.

Belongs to the bacterial CoaD family. As to quaternary structure, homohexamer. The cofactor is Mg(2+).

The protein resides in the cytoplasm. The catalysed reaction is (R)-4'-phosphopantetheine + ATP + H(+) = 3'-dephospho-CoA + diphosphate. Its pathway is cofactor biosynthesis; coenzyme A biosynthesis; CoA from (R)-pantothenate: step 4/5. In terms of biological role, reversibly transfers an adenylyl group from ATP to 4'-phosphopantetheine, yielding dephospho-CoA (dPCoA) and pyrophosphate. The sequence is that of Phosphopantetheine adenylyltransferase from Streptococcus mutans serotype c (strain ATCC 700610 / UA159).